Reading from the N-terminus, the 431-residue chain is Glutamyl-tRNA reductase (431 aa).

Residues 49–52 (TCNR), serine 109, 114–116 (EGQ), and glutamine 120 contribute to the substrate site. The active-site Nucleophile is the cysteine 50. An NADP(+)-binding site is contributed by 189–194 (GAGKMA).

This sequence belongs to the glutamyl-tRNA reductase family. Homodimer.

The catalysed reaction is (S)-4-amino-5-oxopentanoate + tRNA(Glu) + NADP(+) = L-glutamyl-tRNA(Glu) + NADPH + H(+). It functions in the pathway porphyrin-containing compound metabolism; protoporphyrin-IX biosynthesis; 5-aminolevulinate from L-glutamyl-tRNA(Glu): step 1/2. Its pathway is porphyrin-containing compound metabolism; chlorophyll biosynthesis. Functionally, catalyzes the NADPH-dependent reduction of glutamyl-tRNA(Glu) to glutamate 1-semialdehyde (GSA). The chain is Glutamyl-tRNA reductase from Synechococcus sp. (strain JA-3-3Ab) (Cyanobacteria bacterium Yellowstone A-Prime).